A 123-amino-acid polypeptide reads, in one-letter code: Cytochrome b-c1 complex subunit 7 (123 aa).

It belongs to the UQCRB/QCR7 family. In terms of assembly, component of the ubiquinol-cytochrome c oxidoreductase (cytochrome b-c1 complex, complex III, CIII), a multisubunit enzyme composed of 3 respiratory subunits cytochrome b, cytochrome c1 and Rieske protein, 2 core protein subunits, and additional low-molecular weight protein subunits. The complex exists as an obligatory dimer and forms supercomplexes (SCs) in the inner mitochondrial membrane with cytochrome c oxidase (complex IV, CIV). The N-terminus is blocked.

It localises to the mitochondrion inner membrane. Functionally, component of the ubiquinol-cytochrome c oxidoreductase, a multisubunit transmembrane complex that is part of the mitochondrial electron transport chain which drives oxidative phosphorylation. The respiratory chain contains 3 multisubunit complexes succinate dehydrogenase (complex II, CII), ubiquinol-cytochrome c oxidoreductase (cytochrome b-c1 complex, complex III, CIII) and cytochrome c oxidase (complex IV, CIV), that cooperate to transfer electrons derived from NADH and succinate to molecular oxygen, creating an electrochemical gradient over the inner membrane that drives transmembrane transport and the ATP synthase. The cytochrome b-c1 complex catalyzes electron transfer from ubiquinol to cytochrome c, linking this redox reaction to translocation of protons across the mitochondrial inner membrane, with protons being carried across the membrane as hydrogens on the quinol. In the process called Q cycle, 2 protons are consumed from the matrix, 4 protons are released into the intermembrane space and 2 electrons are passed to cytochrome c. In Solanum tuberosum (Potato), this protein is Cytochrome b-c1 complex subunit 7.